A 218-amino-acid chain; its full sequence is Small ribosomal subunit protein uS3c (218 aa).

Residues 47–118 form the KH type-2 domain; sequence VQKHMRISSG…RLNIAIARVA (72 aa).

Belongs to the universal ribosomal protein uS3 family. As to quaternary structure, part of the 30S ribosomal subunit.

It is found in the plastid. It localises to the chloroplast. The sequence is that of Small ribosomal subunit protein uS3c (rps3) from Nymphaea alba (White water-lily).